Reading from the N-terminus, the 785-residue chain is Tripartite terminase subunit 1 (785 aa).

The C3H1-type zinc-finger motif lies at 197–225 (CAVCFEELCVTANQGATIARRLADRICNH). 2 disordered regions span residues 433 to 452 (GGAA…GDRV) and 457 to 489 (GARG…GDIA). Position 696–703 (696–703 (FASVYRCG)) interacts with ATP.

This sequence belongs to the herpesviridae TRM1 protein family. Associates with TRM2 and TRM3 to form the tripartite terminase complex. Interacts with portal protein.

The protein resides in the host nucleus. Its function is as follows. Component of the molecular motor that translocates viral genomic DNA in empty capsid during DNA packaging. Forms a tripartite terminase complex together with TRM2 and TRM3 in the host cytoplasm. Once the complex reaches the host nucleus, it interacts with the capsid portal vertex. This portal forms a ring in which genomic DNA is translocated into the capsid. TRM1 carries an endonuclease activity that plays an important role for the cleavage of concatemeric viral DNA into unit length genomes. The chain is Tripartite terminase subunit 1 from Human herpesvirus 1 (strain 17) (HHV-1).